A 220-amino-acid chain; its full sequence is Pyrrolidone-carboxylate peptidase (220 aa).

Active-site residues include glutamate 80, cysteine 143, and histidine 167.

This sequence belongs to the peptidase C15 family. As to quaternary structure, homotetramer.

It localises to the cytoplasm. It carries out the reaction Release of an N-terminal pyroglutamyl group from a polypeptide, the second amino acid generally not being Pro.. In terms of biological role, removes 5-oxoproline from various penultimate amino acid residues except L-proline. The protein is Pyrrolidone-carboxylate peptidase (pcp) of Thermococcus litoralis (strain ATCC 51850 / DSM 5473 / JCM 8560 / NS-C).